The sequence spans 1690 residues: Collagen alpha-4(IV) chain (1690 aa).

An N-terminal signal peptide occupies residues 1 to 38; the sequence is MWSLHIVLMRCSFRLTKSLATGPWSLILILFSVQYVYG. Residues 39-64 are 7S domain; that stretch reads SGKKYIGPCGGRDCSVCHCVPEKGSR. Disordered stretches follow at residues 61–173 and 187–258; these read KGSR…GEKG and GDRG…GPTL. The interval 65-1459 is triple-helical region; the sequence is GPPGPPGPQG…IGDPGPKGFG (1395 aa). Pro residues predominate over residues 66-75; the sequence is PPGPPGPQGP. Positions 76 to 88 are enriched in low complexity; that stretch reads IGPLGAPGPIGLS. Positions 94–96 match the Cell attachment site motif; the sequence is RGD. The N-linked (GlcNAc...) asparagine glycan is linked to N142. Positions 145-147 match the Cell attachment site motif; that stretch reads RGD. Residues 149-164 are compositionally biased toward gly residues; that stretch reads GFPGGRGALGPGGPLG. Residues 189 to 191 carry the Cell attachment site motif; sequence RGD. Gly residues predominate over residues 199 to 208; it reads GSWGAGGPAG. The Cell attachment site signature appears at 310–312; that stretch reads RGD. 3 disordered regions span residues 369 to 390, 405 to 451, and 469 to 1457; these read PGDP…PGPP, GPPG…GLQG, and GIKG…GPKG. Low complexity predominate over residues 412-434; it reads FPGLPGLPGEAGIPGRPDSAPGK. Composition is skewed to pro residues over residues 498 to 507 and 529 to 540; these read PMGPPGPPGL and PGPPGAEGPPGL. Positions 586 to 607 are enriched in basic and acidic residues; it reads HGRDGHAGEKGDPGPPGDHEDA. The span at 644–655 shows a compositional bias: low complexity; sequence PGVPGHPGVRGP. N669 is a glycosylation site (N-linked (GlcNAc...) asparagine). Residues 681-690 show a composition bias toward pro residues; it reads FDGPPGPKGF. Short sequence motifs (cell attachment site) lie at residues 724–726 and 785–787; these read RGD. Residues 849–858 are compositionally biased toward gly residues; it reads GAPGGKGQPG. Low complexity-rich tracts occupy residues 866-880 and 907-917; these read AGMK…RPGA and PRGLPGFPGFP. A Cell attachment site motif is present at residues 989-991; that stretch reads RGD. A compositionally biased stretch (pro residues) spans 1023–1032; sequence PGPPGPPGPP. Over residues 1108–1117 the composition is skewed to low complexity; the sequence is PGIQGPRGSP. The span at 1119–1131 shows a compositional bias: pro residues; it reads RPGPPGSSGPPGC. A Cell attachment site motif is present at residues 1212–1214; the sequence is RGD. Composition is skewed to pro residues over residues 1220 to 1243, 1256 to 1280, 1297 to 1309, 1338 to 1353, and 1443 to 1452; these read ISPP…PPGP, DPGP…PPGL, PGPP…PGPP, FPGP…PPGR, and GPGPPGPIGD. The 226-residue stretch at 1465–1690 folds into the Collagen IV NC1 domain; it reads GFLLVLHSQT…SRCQVCVKYS (226 aa). 6 disulfides stabilise this stretch: C1480–C1569, C1513–C1566, C1525–C1531, C1588–C1686, C1622–C1683, and C1634–C1641.

The protein belongs to the type IV collagen family. There are six type IV collagen isoforms, alpha 1(IV)-alpha 6(IV), each of which can form a triple helix structure with 2 other chains to generate type IV collagen network. The alpha 3(IV) chain forms a triple helical protomer with alpha 4(IV) and alpha 5(IV); this triple helical structure dimerizes through NC1-NC1 domain interactions such that the alpha 3(IV), alpha 4(IV) and alpha 5(IV) chains of one protomer connect with the alpha 5(IV), alpha 4(IV) and alpha 3(IV) chains of the opposite protomer, respectively. Associates with LAMB2 at the neuromuscular junction and in GBM. In terms of processing, prolines at the third position of the tripeptide repeating unit (G-X-Y) are hydroxylated in some or all of the chains. Type IV collagens contain numerous cysteine residues which are involved in inter- and intramolecular disulfide bonding. 12 of these, located in the NC1 domain, are conserved in all known type IV collagens. Post-translationally, the trimeric structure of the NC1 domains is stabilized by covalent bonds between Lys and Met residues. As to expression, expressed in Bruch's membrane, outer plexiform layer, inner nuclear layer, inner plexiform layer, ganglion cell layer, inner limiting membrane and around the blood vessels of the retina (at protein level). Alpha 3 and alpha 4 type IV collagens are colocalized and present in kidney, eye, basement membranes of lens capsule, cochlea, lung, skeletal muscle, aorta, synaptic fibers, fetal kidney and fetal lung. PubMed:8083201 reports similar levels of expression of alpha 3 and alpha 4 type IV collagens in kidney, but PubMed:7523402 reports that in kidney levels of alpha 3 type IV collagen are significantly lower than those of alpha 4 type IV collagen. Highest levels of expression of alpha 4 type IV collagen are detected in kidney, calvaria, neuroretina and cardiac muscle. Lower levels of expression are observed in brain, lung and thymus, and no expression is detected in choroid plexus, liver, adrenal, pancreas, ileum or skin.

It localises to the secreted. The protein localises to the extracellular space. The protein resides in the extracellular matrix. It is found in the basement membrane. In terms of biological role, type IV collagen is the major structural component of glomerular basement membranes (GBM), forming a 'chicken-wire' meshwork together with laminins, proteoglycans and entactin/nidogen. The sequence is that of Collagen alpha-4(IV) chain (COL4A4) from Homo sapiens (Human).